Reading from the N-terminus, the 310-residue chain is Pyrimidine-specific ribonucleoside hydrolase RihA (310 aa).

Residue histidine 240 is part of the active site.

It belongs to the IUNH family. RihA subfamily.

In terms of biological role, hydrolyzes cytidine or uridine to ribose and cytosine or uracil, respectively. The chain is Pyrimidine-specific ribonucleoside hydrolase RihA from Photobacterium profundum (strain SS9).